Consider the following 268-residue polypeptide: MADPRPDPDELARRAAQVIADRTGIGEHDVAVVLGSGWLPAVAALGSPTTVLPQAELPGFVPPTAAGHAGELLSVPIGAHRVLVLAGRIHAYEGHDLRYVVHPVRAARAAGAQIMVLTNAAGGLRADLQVGQPVLISDHLNLTARSPLVGGEFVDLTDAYSPRLRELARQSDPQLAEGVYAGLPGPHYETPAEIRMLQTLGADLVGMSTVHETIAARAAGAEVLGVSLVTNLAAGITGEPLSHAEVLAAGAASATRMGALLADVIARF.

Phosphate-binding positions include Ser36, His68, 88 to 90, and Ala120; that span reads RIH. Residue Glu189 coordinates a purine D-ribonucleoside. Ser208 provides a ligand contact to phosphate. Asn231 is an a purine D-ribonucleoside binding site.

This sequence belongs to the PNP/MTAP phosphorylase family. As to quaternary structure, homotrimer.

The enzyme catalyses a purine 2'-deoxy-D-ribonucleoside + phosphate = a purine nucleobase + 2-deoxy-alpha-D-ribose 1-phosphate. Its pathway is purine metabolism; purine nucleoside salvage. Its function is as follows. The purine nucleoside phosphorylases catalyze the phosphorolytic breakdown of the N-glycosidic bond in the beta-(deoxy)ribonucleoside molecules, with the formation of the corresponding free purine bases and pentose-1-phosphate. Cleaves guanosine, inosine, 2'-deoxyguanosine and 2'-deoxyinosine. The sequence is that of Purine nucleoside phosphorylase (punA) from Mycobacterium bovis (strain ATCC BAA-935 / AF2122/97).